Reading from the N-terminus, the 501-residue chain is Zinc finger protein PLAG1 (501 aa).

A disordered region spans residues 1–30 (MATVIPGDLSEVRDTQKVPSGKRKRGETKP). A Nuclear localization signal motif is present at residues 22 to 25 (KRKR). C2H2-type zinc fingers lie at residues 34–56 (FPCQLCDKAFNSVEKLKVHSYSH), 62–86 (YKCTQQDCTKAFVSKYKLLRHMATH), 92–114 (HKCNYCEKMFHRKDHLKNHLHTH), 121–143 (FKCEECGKNYNTKLGFKRHLALH), 150–172 (LTCKVCLQTFESTGVLLEHLKTH), 185–207 (HQCEHCDRRFYTRKDVRRHMVVH), and 213–236 (FLCQYCAQRFGRKDHLTRHMKKSH). Composition is skewed to low complexity over residues 366 to 380 (SGMPSSSQDSQASSS) and 455 to 467 (TQLPPQTQDPQDP). Disordered stretches follow at residues 366 to 406 (SGMP…GSVP) and 447 to 474 (QEEAHSSMTQLPPQTQDPQDPSNSIGLG).

This sequence belongs to the krueppel C2H2-type zinc-finger protein family. As to expression, expressed in nephroblastoma.

The protein resides in the nucleus. Functionally, transcription factor and proto-oncogene whose activation results in up-regulation of target genes, such as IGFII, leading to uncontrolled cell proliferation. This Gallus gallus (Chicken) protein is Zinc finger protein PLAG1 (PLAG1).